The primary structure comprises 512 residues: GTPase Obg (512 aa).

Residues alanine 2–valine 159 form the Obg domain. The region spanning alanine 160–glutamate 336 is the OBG-type G domain. GTP-binding positions include glycine 166–serine 173, phenylalanine 191–histidine 195, aspartate 212–glycine 215, asparagine 288–aspartate 291, and serine 317–valine 319. Residues serine 173 and threonine 193 each coordinate Mg(2+). The region spanning proline 355–proline 439 is the OCT domain. The segment at glycine 491–alanine 512 is disordered. Residues alanine 497–alanine 512 are compositionally biased toward acidic residues.

The protein belongs to the TRAFAC class OBG-HflX-like GTPase superfamily. OBG GTPase family. In terms of assembly, monomer. Mg(2+) serves as cofactor.

The protein resides in the cytoplasm. Functionally, an essential GTPase which binds GTP, GDP and possibly (p)ppGpp with moderate affinity, with high nucleotide exchange rates and a fairly low GTP hydrolysis rate. Plays a role in control of the cell cycle, stress response, ribosome biogenesis and in those bacteria that undergo differentiation, in morphogenesis control. In Clavibacter michiganensis subsp. michiganensis (strain NCPPB 382), this protein is GTPase Obg.